A 245-amino-acid polypeptide reads, in one-letter code: 6-carboxyhexanoate--CoA ligase (245 aa).

The protein belongs to the BioW family. In terms of assembly, homodimer. It depends on Mg(2+) as a cofactor.

The enzyme catalyses heptanedioate + ATP + CoA = 6-carboxyhexanoyl-CoA + AMP + diphosphate. It functions in the pathway metabolic intermediate metabolism; pimeloyl-CoA biosynthesis; pimeloyl-CoA from pimelate: step 1/1. Catalyzes the transformation of pimelate into pimeloyl-CoA with concomitant hydrolysis of ATP to AMP. In Thermodesulfovibrio yellowstonii (strain ATCC 51303 / DSM 11347 / YP87), this protein is 6-carboxyhexanoate--CoA ligase.